The chain runs to 319 residues: tRNA uridine(34) hydroxylase (319 aa).

A Rhodanese domain is found at 133–231; the sequence is EDPNSVVIDT…YLEDVSSENS (99 aa). Catalysis depends on cysteine 191, which acts as the Cysteine persulfide intermediate.

The protein belongs to the TrhO family.

It carries out the reaction uridine(34) in tRNA + AH2 + O2 = 5-hydroxyuridine(34) in tRNA + A + H2O. Its function is as follows. Catalyzes oxygen-dependent 5-hydroxyuridine (ho5U) modification at position 34 in tRNAs. This is tRNA uridine(34) hydroxylase from Prochlorococcus marinus (strain NATL2A).